A 54-amino-acid chain; its full sequence is MAGKRDKIRLISSADTGHFYTTDKNKKNTPGKLEFKKYDPRVRRHVIYKEGKIK.

It belongs to the bacterial ribosomal protein bL33 family.

The chain is Large ribosomal subunit protein bL33 from Xylella fastidiosa (strain M23).